The sequence spans 79 residues: Small ribosomal subunit protein bS18 (79 aa).

It belongs to the bacterial ribosomal protein bS18 family. As to quaternary structure, part of the 30S ribosomal subunit. Forms a tight heterodimer with protein bS6.

In terms of biological role, binds as a heterodimer with protein bS6 to the central domain of the 16S rRNA, where it helps stabilize the platform of the 30S subunit. The protein is Small ribosomal subunit protein bS18 of Ureaplasma parvum serovar 3 (strain ATCC 27815 / 27 / NCTC 11736).